The chain runs to 5635 residues: Hemicentin-1 (5635 aa).

The first 21 residues, 1 to 21 (MISWEVVHTVFLFALLYSSLA), serve as a signal peptide directing secretion. The 176-residue stretch at 41–216 (TLAFVFDVTG…EVLKWVEEAV (176 aa)) folds into the VWFA domain. N-linked (GlcNAc...) asparagine glycosylation is found at asparagine 349 and asparagine 390. Ig-like C2-type domains are found at residues 431–517 (PKVT…FDVS), 520–607 (PPVI…VFLT), 612–697 (PKVT…STLR), 702–788 (PKLM…ITLD), 793–883 (PVFI…TTVT), 890–976 (PLIG…TSVV), 981–1067 (PTIQ…VQLT), 1072–1166 (PRVF…VKLN), 1171–1255 (PKIQ…TEIT), 1262–1354 (PTVE…YNLK), 1358–1447 (PPVI…FNID), 1452–1541 (PTII…IKLT), 1546–1634 (PSIK…FHVD), 1638–1724 (PPMI…KEIK), 1733–1821 (PAIE…FEVT), 1826–1914 (PTIK…IQLH), 1919–2007 (PSLE…YSLQ), 2012–2097 (PSIS…RDID), 2104–2190 (PNIM…YNVN), 2195–2285 (PNIG…YNLQ), 2290–2379 (PTIT…YDLS), 2384–2470 (PSII…RKIF), 2478–2564 (PHIV…RSFS), 2571–2662 (PTIA…YEVK), 2666–2763 (PPII…VNIQ), 2766–2864 (PSFQ…YDVR), 2868–2959 (PPII…FNLN), 2964–3051 (PSVI…FSLT), 3056–3146 (PSIK…FHLN), 3151–3240 (PSIE…YFLS), 3245–3335 (PSVA…FNLN), 3340–3429 (PTIR…YNLQ), 3434–3516 (PNMD…GEVS), 3527–3615 (PHIN…YLVR), 3620–3708 (PNIA…FILT), 3713–3797 (PNIK…RRID), 3804–3892 (PSIA…VDLT), 3897–3983 (PSIA…VTLH), 3988–4076 (PVIQ…LNVQ), 4079–4164 (PVIS…TKLT), 4169–4255 (PRIR…VSLT), 4260–4344 (PTFT…GFVY), 4348–4435 (PPVF…MSLT), and 4440–4527 (PIIT…VIVQ). The cysteines at positions 451 and 499 are disulfide-linked. Asparagine 528, asparagine 550, asparagine 573, and asparagine 620 each carry an N-linked (GlcNAc...) asparagine glycan. The cysteines at positions 541 and 591 are disulfide-linked. An intrachain disulfide couples cysteine 633 to cysteine 681. An N-linked (GlcNAc...) asparagine glycan is attached at asparagine 693. Cysteine 723 and cysteine 772 form a disulfide bridge. Asparagine 809 carries an N-linked (GlcNAc...) asparagine glycan. 2 disulfides stabilise this stretch: cysteine 814–cysteine 867 and cysteine 911–cysteine 960. Residue asparagine 970 is glycosylated (N-linked (GlcNAc...) asparagine). Intrachain disulfides connect cysteine 1002/cysteine 1051 and cysteine 1101/cysteine 1150. The N-linked (GlcNAc...) asparagine glycan is linked to asparagine 1158. A disulfide bridge connects residues cysteine 1192 and cysteine 1241. Asparagine 1272 carries N-linked (GlcNAc...) asparagine glycosylation. A disulfide bond links cysteine 1288 and cysteine 1338. Asparagine 1369 carries an N-linked (GlcNAc...) asparagine glycan. Intrachain disulfides connect cysteine 1382–cysteine 1431 and cysteine 1475–cysteine 1525. N-linked (GlcNAc...) asparagine glycosylation is present at asparagine 1552. Disulfide bonds link cysteine 1569–cysteine 1618, cysteine 1663–cysteine 1712, cysteine 1756–cysteine 1805, and cysteine 1848–cysteine 1898. N-linked (GlcNAc...) asparagine glycosylation occurs at asparagine 1929. Cystine bridges form between cysteine 1942-cysteine 1991 and cysteine 2033-cysteine 2083. Residues asparagine 2112 and asparagine 2155 are each glycosylated (N-linked (GlcNAc...) asparagine). Cystine bridges form between cysteine 2125-cysteine 2174, cysteine 2218-cysteine 2269, and cysteine 2314-cysteine 2363. The N-linked (GlcNAc...) asparagine glycan is linked to asparagine 2395. 3 cysteine pairs are disulfide-bonded: cysteine 2408-cysteine 2457, cysteine 2501-cysteine 2550, and cysteine 2597-cysteine 2646. N-linked (GlcNAc...) asparagine glycosylation occurs at asparagine 2689. 2 disulfides stabilise this stretch: cysteine 2696-cysteine 2745 and cysteine 2799-cysteine 2848. The N-linked (GlcNAc...) asparagine glycan is linked to asparagine 2887. Cysteine 2894 and cysteine 2943 are oxidised to a cystine. The N-linked (GlcNAc...) asparagine glycan is linked to asparagine 2973. Disulfide bonds link cysteine 2986–cysteine 3035, cysteine 3081–cysteine 3130, cysteine 3173–cysteine 3224, cysteine 3268–cysteine 3319, cysteine 3364–cysteine 3413, and cysteine 3457–cysteine 3506. Residues asparagine 3221 and asparagine 3300 are each glycosylated (N-linked (GlcNAc...) asparagine). A glycan (N-linked (GlcNAc...) asparagine) is linked at asparagine 3530. Disulfide bonds link cysteine 3550/cysteine 3599 and cysteine 3643/cysteine 3692. N-linked (GlcNAc...) asparagine glycans are attached at residues asparagine 3689 and asparagine 3727. A disulfide bond links cysteine 3734 and cysteine 3783. Asparagine 3812 is a glycosylation site (N-linked (GlcNAc...) asparagine). 26 cysteine pairs are disulfide-bonded: cysteine 3825/cysteine 3876, cysteine 3918/cysteine 3967, cysteine 4009/cysteine 4058, cysteine 4100/cysteine 4148, cysteine 4190/cysteine 4239, cysteine 4281/cysteine 4328, cysteine 4371/cysteine 4419, cysteine 4461/cysteine 4509, cysteine 4541/cysteine 4578, cysteine 4545/cysteine 4583, cysteine 4556/cysteine 4568, cysteine 4598/cysteine 4635, cysteine 4602/cysteine 4640, cysteine 4613/cysteine 4625, cysteine 4655/cysteine 4692, cysteine 4659/cysteine 4697, cysteine 4670/cysteine 4682, cysteine 4712/cysteine 4749, cysteine 4716/cysteine 4754, cysteine 4727/cysteine 4739, cysteine 4769/cysteine 4806, cysteine 4773/cysteine 4811, cysteine 4784/cysteine 4796, cysteine 4826/cysteine 4863, cysteine 4830/cysteine 4868, and cysteine 4841/cysteine 4853. Asparagine 4029 carries N-linked (GlcNAc...) asparagine glycosylation. 2 N-linked (GlcNAc...) asparagine glycosylation sites follow: asparagine 4401 and asparagine 4491. TSP type-1 domains follow at residues 4529-4584 (HGGF…KPCP), 4586-4641 (DGSW…RPCP), 4643-4698 (HGAW…RNCP), 4700-4755 (HGKW…DPCP), 4757-4812 (HGNW…DMCP), and 4814-4869 (DGSW…QACP). Asparagine 4606 carries N-linked (GlcNAc...) asparagine glycosylation. A Nidogen G2 beta-barrel domain is found at 4871-5093 (GPQRARGSVI…SKGDRSNQCP (223 aa)). Asparagine 4894 and asparagine 5040 each carry an N-linked (GlcNAc...) asparagine glycan. Residues 5107–5146 (DEDECAAGNPCSHSCHNAMGTYYCSCPKGLTIAADGRTCQ) enclose the EGF-like 1; calcium-binding domain. Intrachain disulfides connect cysteine 5111-cysteine 5121, cysteine 5117-cysteine 5130, and cysteine 5132-cysteine 5145. In terms of domain architecture, EGF-like 2; calcium-binding spans 5147–5191 (DIDECALGRHTCHAGQDCDNTIGSYRCVVRCGSGFRRTSDGLSCQ). One can recognise an EGF-like 3; calcium-binding domain in the interval 5192 to 5229 (DINECQESSPCHQRCFNAIGSFHCGCEPGYQLKGRKCM). 3 cysteine pairs are disulfide-bonded: cysteine 5196–cysteine 5206, cysteine 5202–cysteine 5215, and cysteine 5217–cysteine 5228. In terms of domain architecture, EGF-like 4; calcium-binding spans 5230–5271 (DVNECRQNVCRPDQHCKNTRGGYKCIDLCPNGMTKAENGTCI). The N-linked (GlcNAc...) asparagine glycan is linked to asparagine 5267. The 36-residue stretch at 5272 to 5307 (DIDECKDGTHQCRYNQICENTRGSYRCVCPRGYRSQ) folds into the EGF-like 5; calcium-binding domain. Disulfide bonds link cysteine 5276/cysteine 5289, cysteine 5283/cysteine 5298, cysteine 5319/cysteine 5330, cysteine 5326/cysteine 5339, cysteine 5341/cysteine 5354, cysteine 5436/cysteine 5446, cysteine 5442/cysteine 5455, and cysteine 5457/cysteine 5470. The EGF-like 6; calcium-binding domain maps to 5315–5355 (DINECEQVPKPCAHQCSNTPGSFKCICPPGQHLLGDGKSCA). Positions 5432 to 5471 (DIDECENTDACQHECKNTFGSYQCICPPGYQLTHNGKTCQ) constitute an EGF-like 7; calcium-binding domain. N-linked (GlcNAc...) asparagine glycosylation occurs at asparagine 5615.

Expressed in hair follicles and in the dermis (at protein level). As to expression, expressed in skin fibroblasts and retinal pigment epithelium (RPE) cells.

Its subcellular location is the secreted. It localises to the extracellular space. The protein localises to the extracellular matrix. The protein resides in the basement membrane. It is found in the cytoplasm. Its subcellular location is the cell junction. It localises to the cleavage furrow. In terms of biological role, involved in transforming growth factor beta-mediated rearrangement of the podocyte cytoskeleton which includes reduction of F-actin fibers and broadening, flattening and elongation of podocytes. Plays a role in basement membrane organization. May promote cleavage furrow maturation during cytokinesis in preimplantation embryos. May play a role in the architecture of adhesive and flexible epithelial cell junctions. May play a role during myocardial remodeling by imparting an effect on cardiac fibroblast migration. This chain is Hemicentin-1 (HMCN1), found in Homo sapiens (Human).